Here is a 152-residue protein sequence, read N- to C-terminus: Bacchus (152 aa).

Residues 29–41 show a composition bias toward basic and acidic residues; the sequence is DLKAKAAAEDKAA. Residues 29–152 are disordered; that stretch reads DLKAKAAAED…DDGSGSDDQA (124 aa). Positions 42–51 are enriched in low complexity; it reads AADAAGDAAD. Over residues 72-89 the composition is skewed to basic and acidic residues; it reads ESVKGTKRPAEAKSAESK. Residues 99-152 show a composition bias toward acidic residues; it reads GDSDEEEALEEIIEGDSEIESDEYDIPYDGEEDDIECDDDDDDNDDGSGSDDQA.

As to expression, expressed in the brain.

The protein localises to the nucleus. Functionally, negatively regulates tyramine beta-hydroxylase tbh and thus the conversion of tyramine (TA) to octopamine (OA). In tyrosine decarboxylase 2 (Tdc2) neurons, acts in an amine-mediated signaling pathway to negatively regulate acute ethanol sensitivity probably via tbh-mediated depletion of TA. The chain is Bacchus from Drosophila melanogaster (Fruit fly).